We begin with the raw amino-acid sequence, 122 residues long: Large ribosomal subunit protein uL14c (122 aa).

This sequence belongs to the universal ribosomal protein uL14 family. In terms of assembly, part of the 50S ribosomal subunit.

Its subcellular location is the plastid. It is found in the chloroplast. Binds to 23S rRNA. The chain is Large ribosomal subunit protein uL14c from Lemna minor (Common duckweed).